Reading from the N-terminus, the 97-residue chain is Mapk-regulated corepressor-interacting protein 1 (97 aa).

Disordered stretches follow at residues 1–29 (MTSS…NEIF) and 72–97 (SNSL…PKKS). Residues 17–28 (ASNTRSPSSNEI) are compositionally biased toward polar residues. Positions 82–97 (DLNDLKRRTVQDPKKS) are enriched in basic and acidic residues.

This sequence belongs to the MCRIP family.

It is found in the nucleus. It localises to the cytoplasm. The protein resides in the stress granule. Functionally, may play a role in the regulation of the epithelial-mesenchymal transition. The chain is Mapk-regulated corepressor-interacting protein 1 (Mcrip1) from Xenopus tropicalis (Western clawed frog).